Here is a 179-residue protein sequence, read N- to C-terminus: Large ribosomal subunit protein uL5 (179 aa).

The protein belongs to the universal ribosomal protein uL5 family. In terms of assembly, part of the 50S ribosomal subunit; part of the 5S rRNA/L5/L18/L25 subcomplex. Contacts the 5S rRNA and the P site tRNA. Forms a bridge to the 30S subunit in the 70S ribosome.

Its function is as follows. This is one of the proteins that bind and probably mediate the attachment of the 5S RNA into the large ribosomal subunit, where it forms part of the central protuberance. In the 70S ribosome it contacts protein S13 of the 30S subunit (bridge B1b), connecting the 2 subunits; this bridge is implicated in subunit movement. Contacts the P site tRNA; the 5S rRNA and some of its associated proteins might help stabilize positioning of ribosome-bound tRNAs. The protein is Large ribosomal subunit protein uL5 of Edwardsiella ictaluri (strain 93-146).